Reading from the N-terminus, the 158-residue chain is Endoribonuclease YbeY (158 aa).

Residues H117, H121, and H127 each coordinate Zn(2+).

Belongs to the endoribonuclease YbeY family. Requires Zn(2+) as cofactor.

It localises to the cytoplasm. Functionally, single strand-specific metallo-endoribonuclease involved in late-stage 70S ribosome quality control and in maturation of the 3' terminus of the 16S rRNA. The polypeptide is Endoribonuclease YbeY (Psychromonas ingrahamii (strain DSM 17664 / CCUG 51855 / 37)).